A 1360-amino-acid chain; its full sequence is NAD(+) hydrolase sarm1 (1360 aa).

The disordered stretch occupies residues 27-52 (RITGGPGSISTTSASAITAPSTMSQT). Low complexity predominate over residues 34–48 (SISTTSASAITAPST). SAM domains follow at residues 690-754 (WSVE…LKRM) and 760-828 (KDTA…NSLP). Positions 837–981 (KTLDVFVSYR…KLERFLRGEK (145 aa)) constitute a TIR domain. NAD(+) contacts are provided by residues 846–847 (RR) and Glu876. Glu919 is a catalytic residue. Residues 997–1010 (VSYQRMHSNDSDYQ) show a composition bias toward polar residues. Disordered stretches follow at residues 997–1026 (VSYQRMHSNDSDYQSGGAGAGSGAGTGGGG), 1046–1085 (GQANHQANRYRQSPSPARQRGSTSQLSGYSRAPSKRSQIL), 1121–1148 (SAAGLGHGSGSGMGSGYRSHSVDGLLDQ), 1192–1217 (NDSVTRRDKHTLSPPGNVQQHRKSRS), and 1249–1343 (IPMT…GNNK). The span at 1012–1026 (GGAGAGSGAGTGGGG) shows a compositional bias: gly residues. Residues 1046–1073 (GQANHQANRYRQSPSPARQRGSTSQLSG) are compositionally biased toward polar residues. Residues 1125–1135 (LGHGSGSGMGS) are compositionally biased toward gly residues. Residues 1321–1335 (SLTSNKTSNSSLGSN) are compositionally biased toward low complexity.

The protein belongs to the SARM1 family. In terms of tissue distribution, widely expressed in larval brains and adult brains.

The protein localises to the cytoplasm. Its subcellular location is the cell projection. The protein resides in the axon. The catalysed reaction is NAD(+) + H2O = ADP-D-ribose + nicotinamide + H(+). It carries out the reaction NAD(+) = cyclic ADP-beta-D-ribose + nicotinamide + H(+). In terms of biological role, NAD(+) hydrolase, which plays a key role in axonal degeneration following injury by regulating NAD(+) metabolism. Acts as a negative regulator of MYD88- and TRIF-dependent toll-like receptor signaling pathway by promoting Wallerian degeneration, an injury-induced form of programmed subcellular death which involves degeneration of an axon distal to the injury site. Wallerian degeneration is triggered by NAD(+) depletion: in response to injury, it is activated and catalyzes cleavage of NAD(+) into ADP-D-ribose (ADPR), cyclic ADPR (cADPR) and nicotinamide; NAD(+) cleavage promoting axon destruction. Involved in the down-regulation of the tracheal immune response to Gram-negative bacteria. This is likely by mediating Tollo signaling in the tracheal epithelium. The sequence is that of NAD(+) hydrolase sarm1 from Drosophila melanogaster (Fruit fly).